The following is a 617-amino-acid chain: tRNA 5-methylaminomethyl-2-thiouridine biosynthesis bifunctional protein MnmC (617 aa).

The interval 1 to 226 (MLDWQNGQLY…KREMLQGDLP (226 aa)) is tRNA (mnm(5)s(2)U34)-methyltransferase. Residues 241-617 (IGGGIAGCAA…SPAIPVSIKG (377 aa)) are FAD-dependent cmnm(5)s(2)U34 oxidoreductase.

It in the N-terminal section; belongs to the methyltransferase superfamily. tRNA (mnm(5)s(2)U34)-methyltransferase family. In the C-terminal section; belongs to the DAO family. Requires FAD as cofactor.

The protein resides in the cytoplasm. It catalyses the reaction 5-aminomethyl-2-thiouridine(34) in tRNA + S-adenosyl-L-methionine = 5-methylaminomethyl-2-thiouridine(34) in tRNA + S-adenosyl-L-homocysteine + H(+). Its function is as follows. Catalyzes the last two steps in the biosynthesis of 5-methylaminomethyl-2-thiouridine (mnm(5)s(2)U) at the wobble position (U34) in tRNA. Catalyzes the FAD-dependent demodification of cmnm(5)s(2)U34 to nm(5)s(2)U34, followed by the transfer of a methyl group from S-adenosyl-L-methionine to nm(5)s(2)U34, to form mnm(5)s(2)U34. The protein is tRNA 5-methylaminomethyl-2-thiouridine biosynthesis bifunctional protein MnmC of Nitrosospira multiformis (strain ATCC 25196 / NCIMB 11849 / C 71).